Reading from the N-terminus, the 337-residue chain is Inositol 2-dehydrogenase (337 aa).

Belongs to the Gfo/Idh/MocA family. Homotetramer.

It carries out the reaction myo-inositol + NAD(+) = scyllo-inosose + NADH + H(+). Functionally, involved in the oxidation of myo-inositol (MI) to 2-keto-myo-inositol (2KMI or 2-inosose). The polypeptide is Inositol 2-dehydrogenase (Corynebacterium glutamicum (strain R)).